A 319-amino-acid chain; its full sequence is Ester hydrolase C11orf54 homolog (319 aa).

His-270, His-272, and His-282 together coordinate Zn(2+).

In terms of assembly, monomer. Zn(2+) serves as cofactor.

It localises to the nucleus. It is found in the cytoplasm. Functionally, exhibits ester hydrolase activity on the substrate p-nitrophenyl acetate, in vitro. May regulate DNA damage and repair by regulating HIF1A degradation via chaperone-mediated autophagy (CMA). The chain is Ester hydrolase C11orf54 homolog from Danio rerio (Zebrafish).